The following is a 298-amino-acid chain: Acetylglutamate kinase (298 aa).

Substrate contacts are provided by residues 69-70 (GG), Arg-91, and Asn-191.

Belongs to the acetylglutamate kinase family. ArgB subfamily.

It localises to the cytoplasm. The enzyme catalyses N-acetyl-L-glutamate + ATP = N-acetyl-L-glutamyl 5-phosphate + ADP. Its pathway is amino-acid biosynthesis; L-arginine biosynthesis; N(2)-acetyl-L-ornithine from L-glutamate: step 2/4. In terms of biological role, catalyzes the ATP-dependent phosphorylation of N-acetyl-L-glutamate. The polypeptide is Acetylglutamate kinase (Neisseria gonorrhoeae (strain ATCC 700825 / FA 1090)).